The primary structure comprises 154 residues: Myoglobin (154 aa).

Residues 2–148 form the Globin domain; the sequence is GLSDGEWQLV…FRNDMAAKYK (147 aa). Serine 4 carries the post-translational modification Phosphoserine. Nitrite is bound at residue histidine 65. Histidine 65 serves as a coordination point for O2. Threonine 68 is subject to Phosphothreonine. Residue histidine 94 coordinates heme b.

This sequence belongs to the globin family. As to quaternary structure, monomeric.

The protein resides in the cytoplasm. Its subcellular location is the sarcoplasm. It catalyses the reaction Fe(III)-heme b-[protein] + nitric oxide + H2O = Fe(II)-heme b-[protein] + nitrite + 2 H(+). The enzyme catalyses H2O2 + AH2 = A + 2 H2O. In terms of biological role, monomeric heme protein which primary function is to store oxygen and facilitate its diffusion within muscle tissues. Reversibly binds oxygen through a pentacoordinated heme iron and enables its timely and efficient release as needed during periods of heightened demand. Depending on the oxidative conditions of tissues and cells, and in addition to its ability to bind oxygen, it also has a nitrite reductase activity whereby it regulates the production of bioactive nitric oxide. Under stress conditions, like hypoxia and anoxia, it also protects cells against reactive oxygen species thanks to its pseudoperoxidase activity. In Ochotona curzoniae (Black-lipped pika), this protein is Myoglobin (MB).